The sequence spans 95 residues: Aspartyl/glutamyl-tRNA(Asn/Gln) amidotransferase subunit C (95 aa).

The protein belongs to the GatC family. Heterotrimer of A, B and C subunits.

The enzyme catalyses L-glutamyl-tRNA(Gln) + L-glutamine + ATP + H2O = L-glutaminyl-tRNA(Gln) + L-glutamate + ADP + phosphate + H(+). The catalysed reaction is L-aspartyl-tRNA(Asn) + L-glutamine + ATP + H2O = L-asparaginyl-tRNA(Asn) + L-glutamate + ADP + phosphate + 2 H(+). Functionally, allows the formation of correctly charged Asn-tRNA(Asn) or Gln-tRNA(Gln) through the transamidation of misacylated Asp-tRNA(Asn) or Glu-tRNA(Gln) in organisms which lack either or both of asparaginyl-tRNA or glutaminyl-tRNA synthetases. The reaction takes place in the presence of glutamine and ATP through an activated phospho-Asp-tRNA(Asn) or phospho-Glu-tRNA(Gln). This Jannaschia sp. (strain CCS1) protein is Aspartyl/glutamyl-tRNA(Asn/Gln) amidotransferase subunit C.